A 24-amino-acid chain; its full sequence is SM-11044-binding protein (24 aa).

In terms of biological role, may mediate relaxation of depolarized colon tonus. It binds iodocyanopindolol and SM-11044. This is SM-11044-binding protein from Rattus norvegicus (Rat).